A 185-amino-acid polypeptide reads, in one-letter code: Lysozyme g (185 aa).

Glu73 is a catalytic residue.

Belongs to the glycosyl hydrolase 23 family.

The enzyme catalyses Hydrolysis of (1-&gt;4)-beta-linkages between N-acetylmuramic acid and N-acetyl-D-glucosamine residues in a peptidoglycan and between N-acetyl-D-glucosamine residues in chitodextrins.. The sequence is that of Lysozyme g from Cyprinus carpio (Common carp).